A 268-amino-acid chain; its full sequence is Tryptophan synthase alpha chain (268 aa).

Residues glutamate 49 and aspartate 60 each act as proton acceptor in the active site.

It belongs to the TrpA family. As to quaternary structure, tetramer of two alpha and two beta chains.

The catalysed reaction is (1S,2R)-1-C-(indol-3-yl)glycerol 3-phosphate + L-serine = D-glyceraldehyde 3-phosphate + L-tryptophan + H2O. The protein operates within amino-acid biosynthesis; L-tryptophan biosynthesis; L-tryptophan from chorismate: step 5/5. Its function is as follows. The alpha subunit is responsible for the aldol cleavage of indoleglycerol phosphate to indole and glyceraldehyde 3-phosphate. The sequence is that of Tryptophan synthase alpha chain from Salmonella paratyphi A (strain ATCC 9150 / SARB42).